We begin with the raw amino-acid sequence, 86 residues long: Toxin Td2 (86 aa).

The N-terminal stretch at 1-20 (MTRFVLFLNCFFLICMVVEC) is a signal peptide. One can recognise an LCN-type CS-alpha/beta domain in the interval 21-83 (KEGYLMGADG…TWDRATNTCG (63 aa)). 4 cysteine pairs are disulfide-bonded: Cys-31–Cys-82, Cys-35–Cys-57, Cys-43–Cys-63, and Cys-47–Cys-65. Residue Arg-84 is modified to Arginine amide.

Expressed by the venom gland.

Its subcellular location is the secreted. In terms of biological role, beta toxins bind voltage-independently at site-4 of sodium channels (Nav) and shift the voltage of activation toward more negative potentials thereby affecting sodium channel activation and promoting spontaneous and repetitive firing. The polypeptide is Toxin Td2 (Tityus discrepans (Venezuelan scorpion)).